The chain runs to 152 residues: Dynein light chain Tctex-type protein 2B (152 aa).

The protein belongs to the dynein light chain Tctex-type family. As to quaternary structure, light chain of the cytoplasmic dynein complex 2, a multisubunit complex composed at least of eleven different proteins. The cytoplasmic dynein 2 complex consists of two catalytic heavy chains (HCs) and a number of non-catalytic subunits presented by intermediate chains (ICs), light intermediate chains (LICs) and light chains (LCs). Among them, a heavy chain (DYNC2H1), two intermediate chains (DYNC2I2 and DYNC2I1), a light intermediate chain (DYNC2LI1), and a light chain (DYNLT2B) are unique to the dynein-2 complex, but a subset of the light chains are also shared by dynein-1 and dynein-2 complexes. The dimer DYNLT2B-DYNLT1/DYNLT3 interacts with DYNC2I1; this interaction is crucial for retrograde trafficking of ciliary proteins.

Its subcellular location is the dynein axonemal particle. In terms of biological role, acts as one of several non-catalytic accessory components of the cytoplasmic dynein 2 complex (dynein-2 complex), a motor protein complex that drives the movement of cargos along microtubules within cilia and flagella in concert with the intraflagellar transport (IFT) system. Required for proper retrograde ciliary transport. The sequence is that of Dynein light chain Tctex-type protein 2B (DYNLT2B) from Bos taurus (Bovine).